Consider the following 233-residue polypeptide: Phosphoribosylformylglycinamidine synthase subunit PurQ (233 aa).

In terms of domain architecture, Glutamine amidotransferase type-1 spans 3–233 (SAVLVFPGIN…GLVEHLKTAA (231 aa)). The Nucleophile role is filled by C87. Active-site residues include H204 and E206.

In terms of assembly, part of the FGAM synthase complex composed of 1 PurL, 1 PurQ and 2 PurS subunits.

The protein resides in the cytoplasm. The catalysed reaction is N(2)-formyl-N(1)-(5-phospho-beta-D-ribosyl)glycinamide + L-glutamine + ATP + H2O = 2-formamido-N(1)-(5-O-phospho-beta-D-ribosyl)acetamidine + L-glutamate + ADP + phosphate + H(+). It carries out the reaction L-glutamine + H2O = L-glutamate + NH4(+). Its pathway is purine metabolism; IMP biosynthesis via de novo pathway; 5-amino-1-(5-phospho-D-ribosyl)imidazole from N(2)-formyl-N(1)-(5-phospho-D-ribosyl)glycinamide: step 1/2. Functionally, part of the phosphoribosylformylglycinamidine synthase complex involved in the purines biosynthetic pathway. Catalyzes the ATP-dependent conversion of formylglycinamide ribonucleotide (FGAR) and glutamine to yield formylglycinamidine ribonucleotide (FGAM) and glutamate. The FGAM synthase complex is composed of three subunits. PurQ produces an ammonia molecule by converting glutamine to glutamate. PurL transfers the ammonia molecule to FGAR to form FGAM in an ATP-dependent manner. PurS interacts with PurQ and PurL and is thought to assist in the transfer of the ammonia molecule from PurQ to PurL. The protein is Phosphoribosylformylglycinamidine synthase subunit PurQ of Rhodopseudomonas palustris (strain HaA2).